Reading from the N-terminus, the 243-residue chain is Proteasome subunit alpha (243 aa).

Belongs to the peptidase T1A family. As to quaternary structure, the 20S proteasome core is composed of 14 alpha and 14 beta subunits that assemble into four stacked heptameric rings, resulting in a barrel-shaped structure. The two inner rings, each composed of seven catalytic beta subunits, are sandwiched by two outer rings, each composed of seven alpha subunits. The catalytic chamber with the active sites is on the inside of the barrel. Has a gated structure, the ends of the cylinder being occluded by the N-termini of the alpha-subunits. Is capped at one or both ends by the proteasome regulatory ATPase, PAN.

It is found in the cytoplasm. Its activity is regulated as follows. The formation of the proteasomal ATPase PAN-20S proteasome complex, via the docking of the C-termini of PAN into the intersubunit pockets in the alpha-rings, triggers opening of the gate for substrate entry. Interconversion between the open-gate and close-gate conformations leads to a dynamic regulation of the 20S proteasome proteolysis activity. Component of the proteasome core, a large protease complex with broad specificity involved in protein degradation. In Pyrobaculum aerophilum (strain ATCC 51768 / DSM 7523 / JCM 9630 / CIP 104966 / NBRC 100827 / IM2), this protein is Proteasome subunit alpha.